The following is a 462-amino-acid chain: RuvB-like 2 (462 aa).

76–83 (GQPGTGKT) provides a ligand contact to ATP.

The protein belongs to the RuvB family. As to quaternary structure, forms homohexameric rings. Can form a dodecamer with ruvbl2 made of two stacked hexameric rings. Is a component of the RNA polymerase II holoenzyme complex. Component of the chromatin-remodeling Ino80 complex. Component of some MLL1/MLL complex.

The protein resides in the nucleus. The protein localises to the dynein axonemal particle. The catalysed reaction is ATP + H2O = ADP + phosphate + H(+). Functionally, has single-stranded DNA-stimulated ATPase and ATP-dependent DNA helicase (5' to 3') activity suggesting a role in nuclear processes such as recombination and transcription. Proposed core component of the chromatin remodeling INO80 complex which exhibits DNA- and nucleosome-activated ATPase activity and catalyzes ATP-dependent nucleosome sliding. Involved in the endoplasmic reticulum (ER)-associated degradation (ERAD) pathway where it negatively regulates expression of ER stress response genes. The sequence is that of RuvB-like 2 (ruvbl2) from Xenopus laevis (African clawed frog).